The sequence spans 375 residues: EP300-interacting inhibitor of differentiation 3 (375 aa).

The stretch at 23–51 forms a coiled coil; the sequence is AWQHLVKQEEEEAVKKEEKEEGEDEEEEG. The disordered stretch occupies residues 30–68; that stretch reads QEEEEAVKKEEKEEGEDEEEEGSDSSSDDPNPEPPCMHP. Acidic residues predominate over residues 42 to 60; that stretch reads EEGEDEEEEGSDSSSDDPN.

It belongs to the NSE4 family. Component of the SMC5-SMC6 complex which consists at least of SMC5, SMC6, NSMCE2, NSMCE1, NSMCE4A or EID3 and NSMCE3; EID3 seems to be a testis-specific subunit. NSMCE1, NSMCE4A or EID3 and NSMCE3 probably form a subcomplex that bridges the head domains of the SMC5:SMC6 heterodimer. Homodimer, and heterodimer with EID2. Interacts with the C-terminal region of CREBBP.

The protein resides in the nucleus. It is found in the cytoplasm. It localises to the chromosome. The protein localises to the telomere. Its function is as follows. Tissue-specific component of the SMC5-SMC6 complex, a complex involved in repair of DNA double-strand breaks by homologous recombination. The complex may promote sister chromatid homologous recombination by recruiting the SMC1-SMC3 cohesin complex to double-strand breaks. The complex is required for telomere maintenance via recombination and mediates sumoylation of shelterin complex (telosome) components. Functionally, acts as a repressor of nuclear receptor-dependent transcription possibly by interfering with CREBBP-dependent coactivation. May function as a coinhibitor of other CREBBP/EP300-dependent transcription factors. In Mus musculus (Mouse), this protein is EP300-interacting inhibitor of differentiation 3.